A 318-amino-acid chain; its full sequence is tRNA pseudouridine synthase B (318 aa).

The Nucleophile role is filled by Asp-47.

The protein belongs to the pseudouridine synthase TruB family. Type 1 subfamily.

The enzyme catalyses uridine(55) in tRNA = pseudouridine(55) in tRNA. Functionally, responsible for synthesis of pseudouridine from uracil-55 in the psi GC loop of transfer RNAs. The protein is tRNA pseudouridine synthase B of Aliivibrio salmonicida (strain LFI1238) (Vibrio salmonicida (strain LFI1238)).